We begin with the raw amino-acid sequence, 376 residues long: Protein STRICTOSIDINE SYNTHASE-LIKE 8 (376 aa).

The signal sequence occupies residues 1–31; it reads MPISRRVLTPITAAPVILAVLCFFFWSSIIG. Residues N98, N172, and N224 are each glycosylated (N-linked (GlcNAc...) asparagine).

Belongs to the strictosidine synthase family.

The protein localises to the vacuole. The chain is Protein STRICTOSIDINE SYNTHASE-LIKE 8 from Arabidopsis thaliana (Mouse-ear cress).